The following is a 90-amino-acid chain: UPF0386 protein Rru_A2144 (90 aa).

It belongs to the UPF0386 family.

The polypeptide is UPF0386 protein Rru_A2144 (Rhodospirillum rubrum (strain ATCC 11170 / ATH 1.1.1 / DSM 467 / LMG 4362 / NCIMB 8255 / S1)).